We begin with the raw amino-acid sequence, 346 residues long: MVRVGIVGATGYGGAELIRLLAGHPHVEIASLYSSSSEGDGLEKSFPHVAGLGLPTLSPIDADSMSGVNDLIFLATPAGVSSTLSPKLVEKGVKVIDLSGDFRLVNGAVYKTWYKHEPAPSQWVEAAVYGLTEWNQEQVAGASLIANPGCYPTATLLALLPLMKTGWVQSNSWIVDAKSGVSGAGRGVSLGVHYSETNESIHAYKVASHQHTPEIEQELQKQSGEETLVQFTPHLVPMTRGILVTAYGQLTADVTQVQIQELYEATYADKPFVRVRPAGSHPHTKEVYGSNYCDIAIHVDQRTKRVILLSVIDNMMKGAAGQAVQNMNVMFDLPEKTGLPLVPVYP.

Residue Cys150 is part of the active site.

This sequence belongs to the NAGSA dehydrogenase family. Type 1 subfamily.

It localises to the cytoplasm. It carries out the reaction N-acetyl-L-glutamate 5-semialdehyde + phosphate + NADP(+) = N-acetyl-L-glutamyl 5-phosphate + NADPH + H(+). The protein operates within amino-acid biosynthesis; L-arginine biosynthesis; N(2)-acetyl-L-ornithine from L-glutamate: step 3/4. Its function is as follows. Catalyzes the NADPH-dependent reduction of N-acetyl-5-glutamyl phosphate to yield N-acetyl-L-glutamate 5-semialdehyde. This Brevibacillus brevis (strain 47 / JCM 6285 / NBRC 100599) protein is N-acetyl-gamma-glutamyl-phosphate reductase.